The sequence spans 317 residues: Zinc transporter ZIP3 (317 aa).

The Extracellular portion of the chain corresponds to 1–3 (MTK). A helical membrane pass occupies residues 4-24 (LLVAKVLCMVGVFFFMLLGSL). The Cytoplasmic portion of the chain corresponds to 25-42 (LPVKVIEADLEKAHRSKK). The helical transmembrane segment at 43–63 (VLSLCNTFGGGVFLATCFNAL) threads the bilayer. The Extracellular segment spans residues 64–85 (LPAVRDKLQQVLSLGHISTDYP). Residues 86 to 106 (LAETLMMVGFFLTVFVEQLVL) form a helical membrane-spanning segment. Topologically, residues 107–172 (TFRRERPPFI…RELGRPGPLR (66 aa)) are cytoplasmic. Phosphoserine occurs at positions 125 and 129. A helical transmembrane segment spans residues 173-193 (LLSLVFALSAHSVFEGLALGL). Residues 194–199 (QEEGER) lie on the Extracellular side of the membrane. A helical membrane pass occupies residues 200-220 (VVSLFVGVAIHETLVAVALGI). Residues 221 to 232 (SMARSAVPLRDA) lie on the Cytoplasmic side of the membrane. The helical transmembrane segment at 233 to 253 (AKLAVTVSAMIPVGIGLGLGI) threads the bilayer. The Extracellular portion of the chain corresponds to 254–265 (ESARSVASSVAS). Residues 266–286 (ALLQGLAGGTFLFVTFLEILA) traverse the membrane as a helical segment. Residues 287–294 (KELEERSE) lie on the Cytoplasmic side of the membrane. Residues 295–315 (QLLKVLFLVLGYAVLAGMVFL) form a helical membrane-spanning segment. Over 316–317 (KW) the chain is Extracellular.

It belongs to the ZIP transporter (TC 2.A.5) family. Highly expressed in the testes. Highly expressed in dentate gyrus granule cells of the hippocampus. Expressed in the mammary gland.

Its subcellular location is the cell membrane. The protein resides in the apical cell membrane. The enzyme catalyses Zn(2+)(in) = Zn(2+)(out). Transporter for the divalent cation Zn(2+). Mediates the influx of Zn(2+) into cells from extracellular space. Controls Zn(2+) accumulation into dentate gyrus granule cells in the hippocampus. Mediates Zn(2+) reuptake from the secreted milk within the alveolar lumen. The protein is Zinc transporter ZIP3 (Slc39a3) of Mus musculus (Mouse).